Consider the following 214-residue polypeptide: 3-isopropylmalate dehydratase small subunit (214 aa).

The protein belongs to the LeuD family. LeuD type 1 subfamily. Heterodimer of LeuC and LeuD.

It catalyses the reaction (2R,3S)-3-isopropylmalate = (2S)-2-isopropylmalate. Its pathway is amino-acid biosynthesis; L-leucine biosynthesis; L-leucine from 3-methyl-2-oxobutanoate: step 2/4. Its function is as follows. Catalyzes the isomerization between 2-isopropylmalate and 3-isopropylmalate, via the formation of 2-isopropylmaleate. The sequence is that of 3-isopropylmalate dehydratase small subunit from Desulforapulum autotrophicum (strain ATCC 43914 / DSM 3382 / VKM B-1955 / HRM2) (Desulfobacterium autotrophicum).